Reading from the N-terminus, the 137-residue chain is Large ribosomal subunit protein uL13 (137 aa).

This sequence belongs to the universal ribosomal protein uL13 family. As to quaternary structure, part of the 50S ribosomal subunit.

This protein is one of the early assembly proteins of the 50S ribosomal subunit, although it is not seen to bind rRNA by itself. It is important during the early stages of 50S assembly. This chain is Large ribosomal subunit protein uL13, found in Methanococcus maripaludis (strain DSM 14266 / JCM 13030 / NBRC 101832 / S2 / LL).